A 768-amino-acid chain; its full sequence is U-box domain-containing protein 45 (768 aa).

Residues 278-352 enclose the U-box domain; it reads VPPEELRCPI…SSWCEQNGVQ (75 aa). 5 ARM repeats span residues 454 to 497, 500 to 540, 542 to 579, 581 to 620, and 623 to 662; these read EEAR…NLAV, NRNK…CLEE, KPVIGSSLAVPFMVNLLWTETEVQCKVDALHSLFHLST, PPNIPCLLSADLVNALQSLTISDEQRWTEKSLAVLLNLVL, and AGKDEMVSAPSLVSNLCTILDTGEPNEQEQAVSLLLILCN.

Binds to SD129.

It carries out the reaction S-ubiquitinyl-[E2 ubiquitin-conjugating enzyme]-L-cysteine + [acceptor protein]-L-lysine = [E2 ubiquitin-conjugating enzyme]-L-cysteine + N(6)-ubiquitinyl-[acceptor protein]-L-lysine.. It participates in protein modification; protein ubiquitination. In terms of biological role, functions as an E3 ubiquitin ligase. In Arabidopsis thaliana (Mouse-ear cress), this protein is U-box domain-containing protein 45 (PUB45).